The following is a 467-amino-acid chain: Cysteine--tRNA ligase (467 aa).

Cysteine 28 contributes to the Zn(2+) binding site. Residues 30–40 carry the 'HIGH' region motif; the sequence is MTVYDHCHLGH. Residues cysteine 209, histidine 234, and glutamate 238 each contribute to the Zn(2+) site. Residues 266 to 270 carry the 'KMSKS' region motif; that stretch reads KMSKS. Lysine 269 provides a ligand contact to ATP.

This sequence belongs to the class-I aminoacyl-tRNA synthetase family. Monomer. The cofactor is Zn(2+).

Its subcellular location is the cytoplasm. It carries out the reaction tRNA(Cys) + L-cysteine + ATP = L-cysteinyl-tRNA(Cys) + AMP + diphosphate. The chain is Cysteine--tRNA ligase from Nitrosomonas eutropha (strain DSM 101675 / C91 / Nm57).